A 547-amino-acid polypeptide reads, in one-letter code: MNAPIIDPLQGDFPEVIEEYLEHGVIKCVAFNHRGSLLAAGCADGGCVIWDFETRGIAKEIRDNDCSAAITSVSWSKYGHRLLVSAADKSLTLWDVSTGEKIARTILQQTPLQARLNPGLSSPSLCLACPLSSAPMIVDFDIDCTTLLPVSVPEMPDVLAPPQRSKCPESNPPFSPAAACFNKCGDLVYIGNSKGEILIVDYKSVRVLALVSASGAAPVKNIVFSRNGQYLLTNSHDRTIRIYENLLPAKNVLKSLEDLGKNIDGLDGIEKMKTVGSKCLTLFREFQDSVTKMHWKAPCFSGDGEWVVGGSACKGEHKIYIWDRAGHLVKILEGPKEALIDLAWHPVHPIIVSVSLAGLVYIWAKDYTENWSAFAPDFKELEENEEYVEREDEFDLIPETEKVKVLDVNEDEEVDIDTVEKDAFSDSDMSVEELRYLPAEPIPDTNDQQDNLVESIKLIEGQISASPASEEAGQNGHHASSPQAEEMGETRGKRKRKPSEKAMELQAEKAKPLKGSGKTVRAKNRAAFDQETDDSINGGDDDDDAYY.

WD repeat units follow at residues 21–60 (LEHG…IAKE), 65–104 (DCSA…KIAR), 214–253 (SGAA…KNVL), 285–332 (EFQD…VKIL), and 334–373 (GPKE…NWSA). The interval 466–547 (SPASEEAGQN…GGDDDDDAYY (82 aa)) is disordered. The segment covering 499–511 (SEKAMELQAEKAK) has biased composition (basic and acidic residues). The span at 530–547 (QETDDSINGGDDDDDAYY) shows a compositional bias: acidic residues.

Part of a complex composed of TRO, RBL and WDR5A. Interacts with TRO and WDR5A, but not with WDR5B. This complex is formed during both vegetative and reproductive development. Strongly expressed in root tips, shoot apices, vascular tissues, developing embryos and endosperms.

The protein localises to the nucleus. Promotes the expression of FLC and FLC homologs to repress the floral transition. Promotes WRKY70 and LTP7 genes epigenetic methylation (e.g. H3K4me3) and subsequent expression. The polypeptide is Protein RBL (Arabidopsis thaliana (Mouse-ear cress)).